The chain runs to 508 residues: Aldehyde dehydrogenase family 7 member A1 (508 aa).

An NAD(+)-binding site is contributed by 244-249; it reads GSSKVG. Glu266 functions as the Proton acceptor in the catalytic mechanism. Catalysis depends on Cys300, which acts as the Nucleophile.

The protein belongs to the aldehyde dehydrogenase family. In terms of assembly, homotetramer.

It catalyses the reaction an aldehyde + NAD(+) + H2O = a carboxylate + NADH + 2 H(+). The chain is Aldehyde dehydrogenase family 7 member A1 from Pisum sativum (Garden pea).